Here is a 361-residue protein sequence, read N- to C-terminus: Isopentenyl-diphosphate delta-isomerase (361 aa).

12–13 (RK) is a binding site for substrate. FMN-binding positions include S70, 71 to 73 (SMT), S101, and N130. 101-103 (SMR) provides a ligand contact to substrate. Substrate is bound at residue Q165. E166 is a binding site for Mg(2+). FMN contacts are provided by residues K197 and 310–311 (AG).

The protein belongs to the IPP isomerase type 2 family. As to quaternary structure, homooctamer. Dimer of tetramers. FMN is required as a cofactor. It depends on NADPH as a cofactor. The cofactor is Mg(2+).

The protein resides in the cytoplasm. It catalyses the reaction isopentenyl diphosphate = dimethylallyl diphosphate. Functionally, involved in the biosynthesis of isoprenoids. Catalyzes the 1,3-allylic rearrangement of the homoallylic substrate isopentenyl (IPP) to its allylic isomer, dimethylallyl diphosphate (DMAPP). In Chlorobium luteolum (strain DSM 273 / BCRC 81028 / 2530) (Pelodictyon luteolum), this protein is Isopentenyl-diphosphate delta-isomerase.